The chain runs to 593 residues: MWTLVSWVALTAGLVAGTRCPDGQFCPVACCLDPGGASYSCCRPLLDKWPTTLSRHLGGPCQVDAHCSAGHSCIFTVSGTSSCCPFPEAVACGDGHHCCPRGFHCSADGRSCFQRSGNNSVGAIQCPDSQFECPDFSTCCVMVDGSWGCCPMPQASCCEDRVHCCPHGAFCDLVHTRCITPTGTHPLAKKLPAQRTNRAVALSSSVMCPDARSRCPDGSTCCELPSGKYGCCPMPNATCCSDHLHCCPQDTVCDLIQSKCLSKENATTDLLTKLPAHTVGDVKCDMEVSCPDGYTCCRLQSGAWGCCPFTQAVCCEDHIHCCPAGFTCDTQKGTCEQGPHQVPWMEKAPAHLSLPDPQALKRDVPCDNVSSCPSSDTCCQLTSGEWGCCPIPEAVCCSDHQHCCPQGYTCVAEGQCQRGSEIVAGLEKMPARRASLSHPRDIGCDQHTSCPVGQTCCPSLGGSWACCQLPHAVCCEDRQHCCPAGYTCNVKARSCEKEVVSAQPATFLARSPHVGVKDVECGEGHFCHDNQTCCRDNRQGWACCPYRQGVCCADRRHCCPAGFRCAARGTKCLRREAPRWDAPLRDPALRQLL.

A signal peptide spans 1–17; that stretch reads MWTLVSWVALTAGLVAG. N-linked (GlcNAc...) asparagine glycosylation occurs at N118. 2 cysteine pairs are disulfide-bonded: C126–C139 and C133–C149. N236 and N265 each carry an N-linked (GlcNAc...) asparagine glycan. 10 disulfides stabilise this stretch: C284–C296, C290–C306, C297–C314, C307–C321, C315–C328, C322–C335, C366–C378, C372–C388, C397–C410, and C404–C416. N368 is a glycosylation site (N-linked (GlcNAc...) asparagine). N530 carries an N-linked (GlcNAc...) asparagine glycan.

The protein belongs to the granulin family. As to quaternary structure, progranulin is secreted as a homodimer. Interacts with SLPI; interaction protects progranulin from proteolysis. Interacts (via region corresponding to granulin-7 peptide) with CTSD; stabilizes CTSD and increases its proteolytic activity. Interacts (via region corresponding to granulin-7 peptide) with SORT1; this interaction mediates endocytosis and lysosome delivery of progranulin; interaction occurs at the neuronal cell surface in a stressed nervous system. Interacts with PSAP; facilitates lysosomal delivery of progranulin from the extracellular space and the biosynthetic pathway. Forms a complex with PSAP and M6PR; PSAP bridges the binding between progranulin and M6PR. Forms a complex with PSAP and SORT1; progranulin bridges the interaction between PSAP and SORT1; facilitates lysosomal targeting of PSAP via SORT1; interaction enhances PSAP uptake in primary cortical neurons. Interacts (via regions corresponding to granulin-2 and granulin-7 peptides) with GBA1; this interaction prevents aggregation of GBA1-SCARB2 complex via interaction with HSPA1A upon stress. Interacts (via region corresponding to granulin-7 peptide) with HSPA1A; mediates recruitment of HSPA1A to GBA1 and prevents GBA1 aggregation in response to stress. Post-translationally, cleaved by ELANE; proteolysis is blocked by SLPI and is concentration- and time-dependent and induces CXCL8/IL-8 production; granulin-3 and granulin-4 are resistant to ELANE. Cleaved by CTSL in lysosome thus regulating the maturation and turnover of progranulin within the lysosome. As to expression, in myelogenous leukemic cell lines of promonocytic, promyelocytic, and proerythroid lineage, in fibroblasts, and very strongly in epithelial cell lines. Present in inflammatory cells and bone marrow. Highest levels in kidney.

The protein resides in the secreted. The protein localises to the lysosome. Functionally, secreted protein that acts as a key regulator of lysosomal function and as a growth factor involved in inflammation, wound healing and cell proliferation. Regulates protein trafficking to lysosomes, and also the activity of lysosomal enzymes. Also facilitates the acidification of lysosomes, causing degradation of mature CTSD by CTSB. In addition, functions as a wound-related growth factor that acts directly on dermal fibroblasts and endothelial cells to promote division, migration and the formation of capillary-like tubule structures. Also promotes epithelial cell proliferation by blocking TNF-mediated neutrophil activation preventing release of oxidants and proteases. Moreover, modulates inflammation in neurons by preserving neurons survival, axonal outgrowth and neuronal integrity. Its function is as follows. Promotes proliferation of the epithelial cell line A431 in culture. Inhibits epithelial cell proliferation and induces epithelial cells to secrete IL-8. In terms of biological role, stabilizes CTSD through interaction with CTSD leading to maintain its aspartic-type peptidase activity. The chain is Progranulin from Homo sapiens (Human).